Reading from the N-terminus, the 171-residue chain is Translation initiation factor IF-3 (171 aa).

It belongs to the IF-3 family. As to quaternary structure, monomer.

It is found in the cytoplasm. In terms of biological role, IF-3 binds to the 30S ribosomal subunit and shifts the equilibrium between 70S ribosomes and their 50S and 30S subunits in favor of the free subunits, thus enhancing the availability of 30S subunits on which protein synthesis initiation begins. This is Translation initiation factor IF-3 from Listeria innocua serovar 6a (strain ATCC BAA-680 / CLIP 11262).